The sequence spans 992 residues: UPF0182 protein BCG_3215c (992 aa).

7 consecutive transmembrane segments (helical) span residues 18 to 38 (ILIMIALGVIVLLLAGPRLID), 63 to 83 (IVVCLVAGVVVGGIVFGGLAL), 113 to 133 (LVGIGIPAAIGLLAGIVAQSY), 175 to 195 (LVSVFLAFVANLVAHYIFGGI), 210 to 230 (VQLVSLVGVLVLLKAVAYWLD), 259 to 279 (KLILMAIALICAAAVFSAIAL), and 287 to 307 (IGLVLLLLSSLIVGAGWPLIV). The disordered stretch occupies residues 906–938 (PTEAAVPPSPAANPPPPASGPQPPPVTAAPPVP). Over residues 912–938 (PPSPAANPPPPASGPQPPPVTAAPPVP) the composition is skewed to pro residues.

Belongs to the UPF0182 family.

Its subcellular location is the cell membrane. This chain is UPF0182 protein BCG_3215c, found in Mycobacterium bovis (strain BCG / Pasteur 1173P2).